A 285-amino-acid chain; its full sequence is Acetyl-coenzyme A carboxylase carboxyl transferase subunit beta (285 aa).

Residues 29 to 285 (IMTKCPKCKK…ILKIHQEVTK (257 aa)) enclose the CoA carboxyltransferase N-terminal domain. Residues Cys-33, Cys-36, Cys-52, and Cys-55 each coordinate Zn(2+). A C4-type zinc finger spans residues 33 to 55 (CPKCKKIMYTKELAENLNVCFNC).

Belongs to the AccD/PCCB family. Acetyl-CoA carboxylase is a heterohexamer composed of biotin carboxyl carrier protein (AccB), biotin carboxylase (AccC) and two subunits each of ACCase subunit alpha (AccA) and ACCase subunit beta (AccD). Zn(2+) serves as cofactor.

It localises to the cytoplasm. It catalyses the reaction N(6)-carboxybiotinyl-L-lysyl-[protein] + acetyl-CoA = N(6)-biotinyl-L-lysyl-[protein] + malonyl-CoA. The protein operates within lipid metabolism; malonyl-CoA biosynthesis; malonyl-CoA from acetyl-CoA: step 1/1. Component of the acetyl coenzyme A carboxylase (ACC) complex. Biotin carboxylase (BC) catalyzes the carboxylation of biotin on its carrier protein (BCCP) and then the CO(2) group is transferred by the transcarboxylase to acetyl-CoA to form malonyl-CoA. This Staphylococcus aureus (strain MSSA476) protein is Acetyl-coenzyme A carboxylase carboxyl transferase subunit beta.